Reading from the N-terminus, the 376-residue chain is 23S rRNA (uracil(747)-C(5))-methyltransferase RlmC (376 aa).

Positions 3, 11, 14, and 87 each coordinate [4Fe-4S] cluster. Residues Q212, F241, E262, and N307 each contribute to the S-adenosyl-L-methionine site. C334 serves as the catalytic Nucleophile.

The protein belongs to the class I-like SAM-binding methyltransferase superfamily. RNA M5U methyltransferase family. RlmC subfamily.

It catalyses the reaction uridine(747) in 23S rRNA + S-adenosyl-L-methionine = 5-methyluridine(747) in 23S rRNA + S-adenosyl-L-homocysteine + H(+). Functionally, catalyzes the formation of 5-methyl-uridine at position 747 (m5U747) in 23S rRNA. In Citrobacter koseri (strain ATCC BAA-895 / CDC 4225-83 / SGSC4696), this protein is 23S rRNA (uracil(747)-C(5))-methyltransferase RlmC.